Consider the following 552-residue polypeptide: Glutamine--tRNA ligase (552 aa).

Residues 34-44 (PEPNGYLHIGH) carry the 'HIGH' region motif. ATP-binding positions include 35-37 (EPN) and 41-47 (HIGHAKS). Positions 67 and 212 each coordinate L-glutamine. Residues Thr-231, 261-262 (RL), and 269-271 (MSK) each bind ATP. A 'KMSKS' region motif is present at residues 268–272 (IMSKR).

The protein belongs to the class-I aminoacyl-tRNA synthetase family. In terms of assembly, monomer.

Its subcellular location is the cytoplasm. The enzyme catalyses tRNA(Gln) + L-glutamine + ATP = L-glutaminyl-tRNA(Gln) + AMP + diphosphate. The chain is Glutamine--tRNA ligase from Pectobacterium atrosepticum (strain SCRI 1043 / ATCC BAA-672) (Erwinia carotovora subsp. atroseptica).